The sequence spans 232 residues: Large ribosomal subunit protein uL16m (232 aa).

The transit peptide at 1 to 41 (MFPYLTRMNLSIKMGGLTLKESSPNAFLNNTTIARRFKHEY) directs the protein to the mitochondrion.

This sequence belongs to the universal ribosomal protein uL16 family. In terms of assembly, component of the mitochondrial large ribosomal subunit (mt-LSU). Mature yeast 74S mitochondrial ribosomes consist of a small (37S) and a large (54S) subunit. The 37S small subunit contains a 15S ribosomal RNA (15S mt-rRNA) and 34 different proteins. The 54S large subunit contains a 21S rRNA (21S mt-rRNA) and 46 different proteins.

Its subcellular location is the mitochondrion. Its function is as follows. Component of the mitochondrial ribosome (mitoribosome), a dedicated translation machinery responsible for the synthesis of mitochondrial genome-encoded proteins, including at least some of the essential transmembrane subunits of the mitochondrial respiratory chain. The mitoribosomes are attached to the mitochondrial inner membrane and translation products are cotranslationally integrated into the membrane. The protein is Large ribosomal subunit protein uL16m (MRPL16) of Saccharomyces cerevisiae (strain ATCC 204508 / S288c) (Baker's yeast).